The primary structure comprises 335 residues: N-acetyl-gamma-glutamyl-phosphate reductase (335 aa).

Cys-156 is an active-site residue.

This sequence belongs to the NAGSA dehydrogenase family. Type 1 subfamily.

The protein localises to the cytoplasm. It catalyses the reaction N-acetyl-L-glutamate 5-semialdehyde + phosphate + NADP(+) = N-acetyl-L-glutamyl 5-phosphate + NADPH + H(+). The protein operates within amino-acid biosynthesis; L-arginine biosynthesis; N(2)-acetyl-L-ornithine from L-glutamate: step 3/4. Functionally, catalyzes the NADPH-dependent reduction of N-acetyl-5-glutamyl phosphate to yield N-acetyl-L-glutamate 5-semialdehyde. The sequence is that of N-acetyl-gamma-glutamyl-phosphate reductase from Tolumonas auensis (strain DSM 9187 / NBRC 110442 / TA 4).